The chain runs to 330 residues: Atypical chemokine receptor 1 (330 aa).

Over 1-57 (MGNCLYPVADDNSTKLAIKEDFLIDFPEDYYPDYNETDVEAAAPCHSCSLLNYSSLP) the chain is Extracellular. N-linked (GlcNAc...) asparagine glycosylation is found at asparagine 12, asparagine 35, and asparagine 52. 2 disulfide bridges follow: cysteine 45–cysteine 270 and cysteine 123–cysteine 189. Residues 58 to 78 (FFILVSILGILASGTILYALL) traverse the membrane as a helical segment. The Cytoplasmic segment spans residues 79-89 (RPLFRWQLYQD). Residues 90–110 (RSTLVQLAVGSALFSIVVPIL) form a helical membrane-spanning segment. Residues 111 to 123 (ARGLSGALITSLC) are Extracellular-facing. A helical membrane pass occupies residues 124–147 (HLAHLVAYGSAFAQALLIGYHACL). Over 148–160 (GPQLGAGQVPGLR) the chain is Cytoplasmic. Residues 161 to 181 (LGVTVGLWGVAALLSLPVVLG) form a helical membrane-spanning segment. Residues 182–201 (SDTSQGLCTVTFSGEWETLR) are Extracellular-facing. Residues 202-222 (YIHAAACFAIFVLLPLGLLGT) traverse the membrane as a helical segment. Over 223–238 (KGLKTVLGRAPCPWVD) the chain is Cytoplasmic. A helical membrane pass occupies residues 239-259 (VLWVWFIFWWPQGMTLGLDSL). The Extracellular portion of the chain corresponds to 260–281 (VRSKAIVVSTCPAQQALDMLLD). Residues 282 to 302 (VAEALAILHCVATPLLLAWVC) form a helical membrane-spanning segment. The Cytoplasmic segment spans residues 303-330 (YQATHTSPPSLPLPTTQTSHLDTLGGKS).

It belongs to the G-protein coupled receptor 1 family. Atypical chemokine receptor subfamily.

Its subcellular location is the early endosome. The protein resides in the recycling endosome. It localises to the membrane. Functionally, atypical chemokine receptor that controls chemokine levels and localization via high-affinity chemokine binding that is uncoupled from classic ligand-driven signal transduction cascades, resulting instead in chemokine sequestration, degradation, or transcytosis. Also known as interceptor (internalizing receptor) or chemokine-scavenging receptor or chemokine decoy receptor. Has a promiscuous chemokine-binding profile, interacting with inflammatory chemokines of both the CXC and the CC subfamilies but not with homeostatic chemokines. Acts as a receptor for chemokines including CCL2, CCL5, CCL7, CCL11, CCL13, CCL14, CCL17, CXCL5, CXCL6, IL8/CXCL8, CXCL11, GRO, RANTES, MCP-1 and TARC. May regulate chemokine bioavailability and, consequently, leukocyte recruitment through two distinct mechanisms: when expressed in endothelial cells, it sustains the abluminal to luminal transcytosis of tissue-derived chemokines and their subsequent presentation to circulating leukocytes; when expressed in erythrocytes, serves as blood reservoir of cognate chemokines but also as a chemokine sink, buffering potential surges in plasma chemokine levels. The protein is Atypical chemokine receptor 1 (ACKR1) of Bos taurus (Bovine).